The following is a 443-amino-acid chain: Elongation factor 1-alpha (443 aa).

Residues 5 to 228 enclose the tr-type G domain; that stretch reads KTHINLVVIG…DTMQPPKRPY (224 aa). The G1 stretch occupies residues 14 to 21; the sequence is GHVDSGKS. GTP is bound at residue 14 to 21; the sequence is GHVDSGKS. The segment at 70–74 is G2; it reads GITID. The tract at residues 91–94 is G3; the sequence is DAPG. GTP contacts are provided by residues 91 to 95 and 153 to 156; these read DAPGH and NKMD. The segment at 153-156 is G4; it reads NKMD. Residues 192 to 194 are G5; sequence SGF.

It belongs to the TRAFAC class translation factor GTPase superfamily. Classic translation factor GTPase family. EF-Tu/EF-1A subfamily.

The protein resides in the cytoplasm. Its function is as follows. This protein promotes the GTP-dependent binding of aminoacyl-tRNA to the A-site of ribosomes during protein biosynthesis. This chain is Elongation factor 1-alpha (MEF-1), found in Plasmodium falciparum (isolate K1 / Thailand).